The primary structure comprises 493 residues: 3-octaprenyl-4-hydroxybenzoate carboxy-lyase (493 aa).

Asparagine 172 is a Mn(2+) binding site. Prenylated FMN-binding positions include 175–177 (IYR), 189–191 (RWL), and 194–195 (RG). Glutamate 238 lines the Mn(2+) pocket. Aspartate 287 serves as the catalytic Proton donor.

It belongs to the UbiD family. Homohexamer. Requires prenylated FMN as cofactor. Mn(2+) is required as a cofactor.

The protein localises to the cell membrane. The enzyme catalyses a 4-hydroxy-3-(all-trans-polyprenyl)benzoate + H(+) = a 2-(all-trans-polyprenyl)phenol + CO2. It functions in the pathway cofactor biosynthesis; ubiquinone biosynthesis. Catalyzes the decarboxylation of 3-octaprenyl-4-hydroxy benzoate to 2-octaprenylphenol, an intermediate step in ubiquinone biosynthesis. In Shewanella amazonensis (strain ATCC BAA-1098 / SB2B), this protein is 3-octaprenyl-4-hydroxybenzoate carboxy-lyase.